The sequence spans 392 residues: N-acyl-phosphatidylethanolamine-hydrolyzing phospholipase D (392 aa).

Met1 carries the post-translational modification N-acetylmethionine. Polar residues predominate over residues 1-16; sequence MDENETNQLLMTSNQY. The segment at 1 to 39 is disordered; it reads MDENETNQLLMTSNQYPKEAVRKRQNSRNSGGSDSSRFS. The segment covering 27 to 36 has biased composition (low complexity); it reads SRNSGGSDSS. His183 and His185 together coordinate Zn(2+). Position 186 (Tyr186) interacts with an N-acyl-1,2-diacyl-sn-glycero-3-phosphoethanolamine. Zn(2+) contacts are provided by Asp187, His188, and His251. Positions 254 and 258 each coordinate deoxycholate. Asp282 is a Zn(2+) binding site. His319 lines the an N-acyl-1,2-diacyl-sn-glycero-3-phosphoethanolamine pocket. Residue His341 participates in Zn(2+) binding. Position 346 (Ala346) interacts with deoxycholate.

The protein belongs to the NAPE-PLD family. Homodimer. Bile acids promote the assembly of inactive monomers into an active dimer and enable catalysis. It depends on Zn(2+) as a cofactor. Widely expressed. Highest expression in brain, kidney and testis (at protein level). Expressed in adipose tissue (at protein level).

It localises to the golgi apparatus membrane. It is found in the early endosome membrane. Its subcellular location is the nucleus envelope. The protein localises to the nucleus. The protein resides in the nucleoplasm. The enzyme catalyses an N-acyl-1,2-diacyl-sn-glycero-3-phosphoethanolamine + H2O = an N-acylethanolamine + a 1,2-diacyl-sn-glycero-3-phosphate + H(+). The catalysed reaction is N-butanoyl-1-hexadecanoyl-2-(9Z,12Z-octadecadienoyl)-sn-glycero-3-phosphoethanolamine + H2O = N-butanoyl ethanolamine + 1-hexadecanoyl-2-(9Z,12Z-octadecadienoyl)-sn-glycero-3-phosphate + H(+). It carries out the reaction N-hexanoyl-1-hexadecanoyl-2-(9Z,12Z-octadecadienoyl)-sn-glycero-3-phosphoethanolamine + H2O = N-hexanoyl ethanolamine + 1-hexadecanoyl-2-(9Z,12Z-octadecadienoyl)-sn-glycero-3-phosphate + H(+). It catalyses the reaction N-octanoyl-1-hexadecanoyl-2-(9Z,12Z-octadecadienoyl)-sn-glycero-3-phosphoethanolamine + H2O = N-octanoyl ethanolamine + 1-hexadecanoyl-2-(9Z,12Z-octadecadienoyl)-sn-glycero-3-phosphate + H(+). The enzyme catalyses N-decanoyl-1-hexadecanoyl-2-(9Z,12Z-octadecadienoyl)-sn-glycero-3-phosphoethanolamine + H2O = N-decanoyl ethanolamine + 1-hexadecanoyl-2-(9Z,12Z-octadecadienoyl)-sn-glycero-3-phosphate + H(+). The catalysed reaction is N-dodecanoyl-1,2-di-(9Z-octadecenoyl)-sn-glycero-3-phosphoethanolamine + H2O = N-dodecanoylethanolamine + 1,2-di-(9Z-octadecenoyl)-sn-glycero-3-phosphate + H(+). It carries out the reaction N-tetradecanoyl-1,2-di-(9Z-octadecenoyl)-sn-glycero-3-phosphoethanolamine + H2O = N-tetradecanoylethanolamine + 1,2-di-(9Z-octadecenoyl)-sn-glycero-3-phosphate + H(+). It catalyses the reaction N-hexadecanoyl-1,2-di-(9Z-octadecenoyl)-sn-glycero-3-phosphoethanolamine + H2O = N-hexadecanoylethanolamine + 1,2-di-(9Z-octadecenoyl)-sn-glycero-3-phosphate + H(+). The enzyme catalyses N,1-dihexadecanoyl-2-(9Z,12Z-octadecadienoyl)-sn-glycero-3-phosphoethanolamine + H2O = 1-hexadecanoyl-2-(9Z,12Z-octadecadienoyl)-sn-glycero-3-phosphate + N-hexadecanoylethanolamine + H(+). The catalysed reaction is N-octadecanoyl-1,2-di-(9Z-octadecenoyl)-sn-glycero-3-phosphoethanolamine + H2O = N-octadecanoyl ethanolamine + 1,2-di-(9Z-octadecenoyl)-sn-glycero-3-phosphate + H(+). It carries out the reaction N,1,2-tri-(9Z-octadecenoyl)-sn-glycero-3-phosphoethanolamine + H2O = N-(9Z-octadecenoyl) ethanolamine + 1,2-di-(9Z-octadecenoyl)-sn-glycero-3-phosphate + H(+). It catalyses the reaction N-(5Z,8Z,11Z,14Z-eicosatetraenoyl)-1,2-diacyl-sn-glycero-3-phosphoethanolamine + H2O = N-(5Z,8Z,11Z,14Z-eicosatetraenoyl)-ethanolamine + a 1,2-diacyl-sn-glycero-3-phosphate + H(+). The enzyme catalyses N-(5Z,8Z,11Z,14Z-eicosatetraenoyl)-1,2-di-(9Z-octadecenoyl)-sn-glycero-3-phosphoethanolamine + H2O = N-(5Z,8Z,11Z,14Z-eicosatetraenoyl)-ethanolamine + 1,2-di-(9Z-octadecenoyl)-sn-glycero-3-phosphate + H(+). The catalysed reaction is 1-O-(1Z-octadecenoyl)-2-(9Z-octadecenoyl)-sn-glycero-3-phospho-N-hexadecanoyl-ethanolamine + H2O = 1-O-(1Z-octadecenoyl)-2-(9Z-octadecenoyl)-sn-glycero-3-phosphate + N-hexadecanoylethanolamine + H(+). It carries out the reaction N,1-diacyl-sn-glycero-3-phosphoethanolamine + H2O = an N-acylethanolamine + a 1-acyl-sn-glycero-3-phosphate + H(+). It catalyses the reaction N,1-dihexadecanoyl-sn-glycero-3-phosphoethanolamine + H2O = N-hexadecanoylethanolamine + 1-hexadecanoyl-sn-glycero-3-phosphate + H(+). The enzyme catalyses N-(5Z,8Z,11Z,14Z-eicosatetraenoyl)-1-(9Z-octadecenoyl)-sn-glycero-3-phosphoethanolamine + H2O = N-(5Z,8Z,11Z,14Z-eicosatetraenoyl)-ethanolamine + 1-(9Z-octadecenoyl)-sn-glycero-3-phosphate + H(+). Activated by divalent cations. Activated by bile acids. D-type phospholipase that hydrolyzes N-acyl-phosphatidylethanolamines (NAPEs) to produce bioactive N-acylethanolamines/fatty acid ethanolamides (NAEs/FAEs) and phosphatidic acid. Cleaves the terminal phosphodiester bond of diacyl- and alkenylacyl-NAPEs, primarily playing a role in the generation of long-chain saturated and monounsaturated NAEs in the brain. May control NAPE homeostasis in dopaminergic neuron membranes and regulate neuron survival, partly through RAC1 activation. As a regulator of lipid metabolism in the adipose tissue, mediates the crosstalk between adipocytes, gut microbiota and immune cells to control body temperature and weight. In particular, regulates energy homeostasis by promoting cold-induced brown or beige adipocyte differentiation program to generate heat from fatty acids and glucose. Has limited D-type phospholipase activity toward N-acyl lyso-NAPEs. This chain is N-acyl-phosphatidylethanolamine-hydrolyzing phospholipase D (NAPEPLD), found in Bos taurus (Bovine).